The primary structure comprises 192 residues: Soluble inorganic pyrophosphatase 2 (192 aa).

Lys38, Arg52, and Tyr64 together coordinate substrate. Mg(2+)-binding residues include Asp74, Asp79, and Asp111. Tyr148 contributes to the substrate binding site.

Monomer. Requires Mg(2+) as cofactor. Post-translationally, the N-terminus is blocked.

The protein resides in the mitochondrion. It catalyses the reaction diphosphate + H2O = 2 phosphate + H(+). This is Soluble inorganic pyrophosphatase 2 (ppa2) from Chlamydomonas reinhardtii (Chlamydomonas smithii).